The following is a 170-amino-acid chain: Acetyl-CoA decarbonylase/synthase complex subunit epsilon 1 (170 aa).

Belongs to the CdhB family. In terms of assembly, heterotetramer of two alpha and two epsilon subunits. The ACDS complex is made up of alpha, epsilon, beta, gamma and delta subunits with a probable stoichiometry of (alpha(2)epsilon(2))(4)-beta(8)-(gamma(1)delta(1))(8).

The protein operates within one-carbon metabolism; methanogenesis from acetate. In terms of biological role, part of a complex that catalyzes the reversible cleavage of acetyl-CoA, allowing growth on acetate as sole source of carbon and energy. The alpha-epsilon subcomponent functions as a carbon monoxide dehydrogenase. The precise role of the epsilon subunit is unclear; it may have a stabilizing role within the alpha(2)epsilon(2) component and/or be involved in electron transfer to FAD during a potential FAD-mediated CO oxidation. The chain is Acetyl-CoA decarbonylase/synthase complex subunit epsilon 1 (cdhB1) from Methanosarcina thermophila.